The following is a 71-amino-acid chain: UPF0346 protein MGAS2096_Spy0401 (71 aa).

Belongs to the UPF0346 family.

This is UPF0346 protein MGAS2096_Spy0401 from Streptococcus pyogenes serotype M12 (strain MGAS2096).